We begin with the raw amino-acid sequence, 378 residues long: MAQTFSDEHFTLGIEEEYLLVDAETYDLAEAPDALMAACADKLSSKVSPEFLQCQIEVGTGVCASIADARADLRNLRATVAECAGRFGLAPIAVSCHPFADWKDQSHTDKDRYNQLARDLGGVVERMLICGAHCHVGLPSENDRVDIMRQMTYFLPHLLALSTSSPFWQGRDTGLASYRLTVFDNLPRTGLPPSFASFDEFQRTVDLLVDMEMIEDSSKIWWDLRPSAAFPTLETRICDVSPRLEDQLSLSALIQCLTRMLMRLRGSNQRWRVYDRFLINENRWRAQRYGVSDGLIDFGRGAVVPLPELVDELIELTEQDAEALGCVDEVQRLRDLAVETSSDRQRKIYKGTRAAGGSHQAAMRSVVEHLLEDFHVDL.

Belongs to the glutamate--cysteine ligase type 2 family. YbdK subfamily.

The enzyme catalyses L-cysteine + L-glutamate + ATP = gamma-L-glutamyl-L-cysteine + ADP + phosphate + H(+). Functionally, ATP-dependent carboxylate-amine ligase which exhibits weak glutamate--cysteine ligase activity. The polypeptide is Putative glutamate--cysteine ligase 2 (Jannaschia sp. (strain CCS1)).